The chain runs to 173 residues: MEEQQRARSHTVTTTTSSFAENFSTTSSSFAYDREFLRTPPGLLIVAEIVLGLLVWTLIAGTEYFRVPAFGWVMFVAVFYWVLTVFFLIVYITLTYTRIPQVPWTTVGLCFNGSAFVLYFSAAIVDASSVSPEKEGHNFNSWAASSFFAFLVTICYAGNTYFSFIAWRSRTAQ.

In terms of domain architecture, MARVEL spans 36–168 (FLRTPPGLLI…NTYFSFIAWR (133 aa)). 4 helical membrane-spanning segments follow: residues 41–61 (PGLL…LIAG), 70–90 (FGWV…FLIV), 105–125 (TTVG…AAIV), and 147–167 (FFAF…FIAW).

This sequence belongs to the chemokine-like factor family.

It localises to the membrane. The protein is CKLF-like MARVEL transmembrane domain-containing protein 8 (Cmtm8) of Mus musculus (Mouse).